The following is a 341-amino-acid chain: Glycerol-3-phosphate dehydrogenase [NAD(P)+] (341 aa).

The NADPH site is built by Ser14, Phe15, Arg35, and Lys108. Residues Lys108 and Gly136 each contribute to the sn-glycerol 3-phosphate site. Ala140 serves as a coordination point for NADPH. Sn-glycerol 3-phosphate is bound by residues Lys191, Asp244, Ser254, Arg255, and Asn256. Lys191 acts as the Proton acceptor in catalysis. Arg255 lines the NADPH pocket. 2 residues coordinate NADPH: Val279 and Glu281.

Belongs to the NAD-dependent glycerol-3-phosphate dehydrogenase family.

It is found in the cytoplasm. It catalyses the reaction sn-glycerol 3-phosphate + NAD(+) = dihydroxyacetone phosphate + NADH + H(+). The catalysed reaction is sn-glycerol 3-phosphate + NADP(+) = dihydroxyacetone phosphate + NADPH + H(+). It participates in membrane lipid metabolism; glycerophospholipid metabolism. Catalyzes the reduction of the glycolytic intermediate dihydroxyacetone phosphate (DHAP) to sn-glycerol 3-phosphate (G3P), the key precursor for phospholipid synthesis. This chain is Glycerol-3-phosphate dehydrogenase [NAD(P)+], found in Pseudomonas savastanoi pv. phaseolicola (strain 1448A / Race 6) (Pseudomonas syringae pv. phaseolicola (strain 1448A / Race 6)).